The primary structure comprises 139 residues: NADPH-dependent 7-cyano-7-deazaguanine reductase (139 aa).

The active-site Thioimide intermediate is the Cys-34. The active-site Proton donor is the Asp-41. Residues 56-58 (IEL) and 75-76 (HE) each bind substrate.

This sequence belongs to the GTP cyclohydrolase I family. QueF type 1 subfamily.

The protein localises to the cytoplasm. The enzyme catalyses 7-aminomethyl-7-carbaguanine + 2 NADP(+) = 7-cyano-7-deazaguanine + 2 NADPH + 3 H(+). Its pathway is tRNA modification; tRNA-queuosine biosynthesis. In terms of biological role, catalyzes the NADPH-dependent reduction of 7-cyano-7-deazaguanine (preQ0) to 7-aminomethyl-7-deazaguanine (preQ1). This Nitrosomonas europaea (strain ATCC 19718 / CIP 103999 / KCTC 2705 / NBRC 14298) protein is NADPH-dependent 7-cyano-7-deazaguanine reductase.